Consider the following 63-residue polypeptide: Large ribosomal subunit protein bL28 (63 aa).

Belongs to the bacterial ribosomal protein bL28 family.

The chain is Large ribosomal subunit protein bL28 from Citrifermentans bemidjiense (strain ATCC BAA-1014 / DSM 16622 / JCM 12645 / Bem) (Geobacter bemidjiensis).